A 146-amino-acid polypeptide reads, in one-letter code: Flagellar assembly factor FliW (146 aa).

The protein belongs to the FliW family. In terms of assembly, interacts with translational regulator CsrA and flagellin(s).

The protein resides in the cytoplasm. In terms of biological role, acts as an anti-CsrA protein, binds CsrA and prevents it from repressing translation of its target genes, one of which is flagellin. Binds to flagellin and participates in the assembly of the flagellum. In Shouchella clausii (strain KSM-K16) (Alkalihalobacillus clausii), this protein is Flagellar assembly factor FliW.